The following is a 175-amino-acid chain: Translation initiation factor IF-3 (175 aa).

The protein belongs to the IF-3 family. In terms of assembly, monomer.

The protein localises to the cytoplasm. IF-3 binds to the 30S ribosomal subunit and shifts the equilibrium between 70S ribosomes and their 50S and 30S subunits in favor of the free subunits, thus enhancing the availability of 30S subunits on which protein synthesis initiation begins. In Blochmanniella floridana, this protein is Translation initiation factor IF-3.